Consider the following 370-residue polypeptide: Cytochrome b (370 aa).

Helical transmembrane passes span Phe25 to Val45, Trp69 to Ile90, Trp105 to Leu125, and Phe170 to Ile190. Heme b is bound by residues His75 and His89. 2 residues coordinate heme b: His174 and His188. His193 lines the a ubiquinone pocket. 4 helical membrane passes run Tyr218 to Ser238, Leu280 to His300, Phe312 to Thr332, and Phe339 to Pro358.

It belongs to the cytochrome b family. As to quaternary structure, the cytochrome bc1 complex contains 3 respiratory subunits (MT-CYB, CYC1 and UQCRFS1), 2 core proteins (UQCRC1 and UQCRC2) and probably 6 low-molecular weight proteins. Heme b is required as a cofactor.

The protein resides in the mitochondrion inner membrane. Its function is as follows. Component of the ubiquinol-cytochrome c reductase complex (complex III or cytochrome b-c1 complex) that is part of the mitochondrial respiratory chain. The b-c1 complex mediates electron transfer from ubiquinol to cytochrome c. Contributes to the generation of a proton gradient across the mitochondrial membrane that is then used for ATP synthesis. This chain is Cytochrome b (MT-CYB), found in Eunectes murinus (Green anaconda).